The following is a 189-amino-acid chain: Putative L,D-transpeptidase in ATP synthase subunits region ORF 5 (189 aa).

The tat-type signal signal peptide spans 1-35 (MTDTLNRRAAMALGLASAAGAALATPALSQDAAPA). One can recognise a L,D-TPase catalytic domain in the interval 59-189 (PMLVADTFSR…CPVGTRVRVI (131 aa)). The Proton donor/acceptor role is filled by His149. Cys165 serves as the catalytic Nucleophile.

This sequence belongs to the YkuD family. In terms of processing, predicted to be exported by the Tat system. The position of the signal peptide cleavage has not been experimentally proven.

The protein operates within cell wall biogenesis; peptidoglycan biosynthesis. This is Putative L,D-transpeptidase in ATP synthase subunits region ORF 5 from Fuscovulum blasticum (Rhodobacter blasticus).